The chain runs to 107 residues: UPF0145 protein YbjQ (107 aa).

Belongs to the UPF0145 family.

The polypeptide is UPF0145 protein YbjQ (Escherichia coli (strain SMS-3-5 / SECEC)).